Consider the following 124-residue polypeptide: Holo-[acyl-carrier-protein] synthase (124 aa).

The Mg(2+) site is built by Asp-8 and Glu-56.

The protein belongs to the P-Pant transferase superfamily. AcpS family. Requires Mg(2+) as cofactor.

It localises to the cytoplasm. It carries out the reaction apo-[ACP] + CoA = holo-[ACP] + adenosine 3',5'-bisphosphate + H(+). Functionally, transfers the 4'-phosphopantetheine moiety from coenzyme A to a Ser of acyl-carrier-protein. The polypeptide is Holo-[acyl-carrier-protein] synthase (Maridesulfovibrio salexigens (strain ATCC 14822 / DSM 2638 / NCIMB 8403 / VKM B-1763) (Desulfovibrio salexigens)).